Reading from the N-terminus, the 507-residue chain is Cytochrome P450 7B1 (507 aa).

Transmembrane regions (helical) follow at residues 14–34 (PLALLGLLFAATLLLSALFLL), 178–198 (IFAFCGSLVFEITFATLYGKI), and 287–307 (FLWASLANTIPAMFWAMYYIL). Residue C447 participates in heme binding.

It belongs to the cytochrome P450 family. Requires heme as cofactor. As to expression, highly expressed in brain structures including the corpus callosum, the anterior commissure and fornix. The hippocampal expression is particularly prominent in the dentate gyrus. Expressed in liver and kidney. The hepatic expression is sexually dimorphic, predominantly detected in male liver while barely detectable in females. Expressed in lymph nodes and spleens, in both lymphoid and stromal compartments. Higher expression is detected in fibroblastic reticular cells, a type of stromal cells in the lymph nodes. Also expressed at high levels in the outer follicle and at the B cell-T cell boundary of splenic germinal centers. Expressed in dendritic cells (DCs) subpopulations being most abundant in CD8-positive DCs.

It is found in the endoplasmic reticulum membrane. The protein resides in the microsome membrane. It carries out the reaction 25-hydroxycholesterol + reduced [NADPH--hemoprotein reductase] + O2 = 7alpha,25-dihydroxycholesterol + oxidized [NADPH--hemoprotein reductase] + H2O + H(+). It catalyses the reaction (25R)-cholest-5-ene-3beta,26-diol + reduced [NADPH--hemoprotein reductase] + O2 = (25R)-cholest-5-en-3beta,7alpha,26-triol + oxidized [NADPH--hemoprotein reductase] + H2O + H(+). The enzyme catalyses (24S)-hydroxycholesterol + reduced [NADPH--hemoprotein reductase] + O2 = (24S)-7alpha-dihydroxycholesterol + oxidized [NADPH--hemoprotein reductase] + H2O + H(+). The catalysed reaction is (24S)-25-epoxycholesterol + reduced [NADPH--hemoprotein reductase] + O2 = (24S,25)-epoxy-7alpha-hydroxycholesterol + oxidized [NADPH--hemoprotein reductase] + H2O + H(+). It carries out the reaction (22R)-hydroxycholesterol + reduced [NADPH--hemoprotein reductase] + O2 = (22R,7alpha)-dihydroxycholesterol + oxidized [NADPH--hemoprotein reductase] + H2O + H(+). It catalyses the reaction androst-5-en-3beta,17beta-diol + reduced [NADPH--hemoprotein reductase] + O2 = androst-5-en-3beta,7alpha,17beta-triol + oxidized [NADPH--hemoprotein reductase] + H2O + H(+). The enzyme catalyses 5alpha-androstane-3beta,17beta-diol + reduced [NADPH--hemoprotein reductase] + O2 = 5alpha-androstane-3beta,6alpha,17beta-triol + oxidized [NADPH--hemoprotein reductase] + H2O + H(+). The catalysed reaction is 3beta-hydroxyandrost-5-en-17-one + reduced [NADPH--hemoprotein reductase] + O2 = 3beta,7alpha-dihydroxyandrost-5-en-17-one + oxidized [NADPH--hemoprotein reductase] + H2O + H(+). It carries out the reaction 3beta-hydroxy-5alpha-androstan-17-one + reduced [NADPH--hemoprotein reductase] + O2 = 3beta,7alpha-dihydroxy-5alpha-androstan-17-one + oxidized [NADPH--hemoprotein reductase] + H2O + H(+). It catalyses the reaction pregnenolone + reduced [NADPH--hemoprotein reductase] + O2 = 7alpha-hydroxypregnenolone + oxidized [NADPH--hemoprotein reductase] + H2O + H(+). The protein operates within lipid metabolism; bile acid biosynthesis. It functions in the pathway steroid hormone biosynthesis. Its activity is regulated as follows. Inhibited by drugs voriconazole and metyrapone. In terms of biological role, a cytochrome P450 monooxygenase involved in the metabolism of endogenous oxysterols and steroid hormones, including neurosteroids. Mechanistically, uses molecular oxygen inserting one oxygen atom into a substrate, and reducing the second into a water molecule, with two electrons provided by NADPH via cytochrome P450 reductase (CPR; NADPH-ferrihemoprotein reductase). Catalyzes the hydroxylation of carbon hydrogen bonds of steroids with a preference for 7-alpha position. Usually metabolizes steroids carrying a hydroxy group at position 3, functioning as a 3-hydroxy steroid 7-alpha hydroxylase. Hydroxylates oxysterols, including 25-hydroxycholesterol and (25R)-cholest-5-ene-3beta,26-diol toward 7-alpha hydroxy derivatives, which may be transported to the liver and converted to bile acids. Via its product 7-alpha,25-dihydroxycholesterol, a ligand for the chemotactic G protein-coupled receptor GPR183/EBI2, regulates B cell migration in germinal centers of lymphoid organs, thus guiding efficient maturation of plasma B cells and overall antigen-specific humoral immune response. 7-alpha hydroxylates neurosteroids, including 3beta-hydroxyandrost-5-en-17-one (dehydroepiandrosterone) and pregnenolone, both involved in hippocampus-associated memory and learning. Metabolizes androstanoids toward 6- or 7-alpha hydroxy derivatives. In Mus musculus (Mouse), this protein is Cytochrome P450 7B1.